The following is a 359-amino-acid chain: Nicotinate-nucleotide--dimethylbenzimidazole phosphoribosyltransferase (359 aa).

The active-site Proton acceptor is Glu-318.

Belongs to the CobT family. In terms of assembly, homodimer.

The catalysed reaction is 5,6-dimethylbenzimidazole + nicotinate beta-D-ribonucleotide = alpha-ribazole 5'-phosphate + nicotinate + H(+). Its pathway is nucleoside biosynthesis; alpha-ribazole biosynthesis; alpha-ribazole from 5,6-dimethylbenzimidazole: step 1/2. Functionally, catalyzes the synthesis of alpha-ribazole-5'-phosphate from nicotinate mononucleotide (NAMN) and 5,6-dimethylbenzimidazole (DMB). In Escherichia coli O157:H7, this protein is Nicotinate-nucleotide--dimethylbenzimidazole phosphoribosyltransferase.